The primary structure comprises 473 residues: MKTLYSLRRFYHVETLFNGTLSLAGRDQETTGFAWWAGNARLINLSGKLLGAHVAHAGLIVFWAGAMNLFEVAHFVPEKPMYEQGLILLPHLATLGWGVGPGGEVIDTFPYFVSGVLHLISSAVLGFGGIYHALLGPETLEESFPFFGYVWKDRNKMTTILGIHLILLGIGAFLLVFKALYFGGVYDTWAPGGGDVRKITNLTLSPSVIFGYLLKSPFGGEGWIVSVDDLEDIIGGHVWLGSICILGGIWHILTKPFAWARRALVWSGEAYLSYSLGALSVFGFIACCFVWFNNTAYPSEFYGPTGPEASQAQAFTFLVRDQRLGANVGSAQGPTGLGKYLMRSPTGEVIFGGETMRFWDLRAPWLEPLRGPNGLDLSRLKKDIQPWQERRSAEYMTHAPLGSLNSVGGVATEINAVNYVSPRSWLATSHFVLGFFLFVGHLWHAGRARAAAAGFEKGIDRDFEPVLSMTPLN.

A propeptide spanning residues 1-14 (MKTLYSLRRFYHVE) is cleaved from the precursor. N-acetylthreonine is present on Thr15. Thr15 carries the phosphothreonine modification. 5 helical membrane passes run 69–93 (LFEVAHFVPEKPMYEQGLILLPHLA), 134–155 (LLGPETLEESFPFFGYVWKDRN), 178–200 (KALYFGGVYDTWAPGGGDVRKIT), 255–275 (KPFAWARRALVWSGEAYLSYS), and 291–312 (WFNNTAYPSEFYGPTGPEASQA). Glu367 is a binding site for [CaMn4O5] cluster. The chain crosses the membrane as a helical span at residues 447-471 (RARAAAAGFEKGIDRDFEPVLSMTP).

The protein belongs to the PsbB/PsbC family. PsbC subfamily. In terms of assembly, PSII is composed of 1 copy each of membrane proteins PsbA, PsbB, PsbC, PsbD, PsbE, PsbF, PsbH, PsbI, PsbJ, PsbK, PsbL, PsbM, PsbT, PsbX, PsbY, PsbZ, Psb30/Ycf12, at least 3 peripheral proteins of the oxygen-evolving complex and a large number of cofactors. It forms dimeric complexes. It depends on Binds multiple chlorophylls and provides some of the ligands for the Ca-4Mn-5O cluster of the oxygen-evolving complex. It may also provide a ligand for a Cl- that is required for oxygen evolution. PSII binds additional chlorophylls, carotenoids and specific lipids. as a cofactor.

The protein resides in the plastid. Its subcellular location is the chloroplast thylakoid membrane. In terms of biological role, one of the components of the core complex of photosystem II (PSII). It binds chlorophyll and helps catalyze the primary light-induced photochemical processes of PSII. PSII is a light-driven water:plastoquinone oxidoreductase, using light energy to abstract electrons from H(2)O, generating O(2) and a proton gradient subsequently used for ATP formation. This is Photosystem II CP43 reaction center protein from Manihot esculenta (Cassava).